Reading from the N-terminus, the 306-residue chain is UDP-N-acetylenolpyruvoylglucosamine reductase (306 aa).

An FAD-binding PCMH-type domain is found at 34–199 (KSGGAAEWLF…VAATFRGHAE (166 aa)). R179 is an active-site residue. The interval 215-234 (REASQPLRSRTGGSTFKNPQ) is disordered. A compositionally biased stretch (polar residues) spans 220-232 (PLRSRTGGSTFKN). The active-site Proton donor is the S228. E298 is a catalytic residue.

This sequence belongs to the MurB family. FAD serves as cofactor.

The protein localises to the cytoplasm. The enzyme catalyses UDP-N-acetyl-alpha-D-muramate + NADP(+) = UDP-N-acetyl-3-O-(1-carboxyvinyl)-alpha-D-glucosamine + NADPH + H(+). The protein operates within cell wall biogenesis; peptidoglycan biosynthesis. In terms of biological role, cell wall formation. This chain is UDP-N-acetylenolpyruvoylglucosamine reductase, found in Rhizorhabdus wittichii (strain DSM 6014 / CCUG 31198 / JCM 15750 / NBRC 105917 / EY 4224 / RW1) (Sphingomonas wittichii).